We begin with the raw amino-acid sequence, 345 residues long: Ferrochelatase (345 aa).

Fe cation-binding residues include histidine 192 and glutamate 295.

It belongs to the ferrochelatase family.

It localises to the cytoplasm. It catalyses the reaction heme b + 2 H(+) = protoporphyrin IX + Fe(2+). It participates in porphyrin-containing compound metabolism; protoheme biosynthesis; protoheme from protoporphyrin-IX: step 1/1. In terms of biological role, catalyzes the ferrous insertion into protoporphyrin IX. This Opitutus terrae (strain DSM 11246 / JCM 15787 / PB90-1) protein is Ferrochelatase.